Here is a 1353-residue protein sequence, read N- to C-terminus: Xanthine dehydrogenase (1353 aa).

In terms of domain architecture, 2Fe-2S ferredoxin-type spans 17–104 (STLIFFVNGK…GSAVTTVEGI (88 aa)). Positions 56, 61, 64, 86, 126, 129, 161, and 163 each coordinate [2Fe-2S] cluster. In terms of domain architecture, FAD-binding PCMH-type spans 245-434 (YKGERATWYR…VGLYFPKTLE (190 aa)). FAD is bound by residues 273–280 (LVVGNTEI), F353, 363–367 (SLGGN), D376, L424, and K442. The Mo-molybdopterin site is built by Q790 and F821. Substrate-binding residues include E825 and R903. R935 serves as a coordination point for Mo-molybdopterin. Substrate is bound at residue F937. Residue A1102 coordinates Mo-molybdopterin. E1285 serves as the catalytic Proton acceptor.

It belongs to the xanthine dehydrogenase family. As to quaternary structure, homodimer. The cofactor is FAD. Mo-molybdopterin is required as a cofactor. Requires [2Fe-2S] cluster as cofactor.

It localises to the peroxisome. It carries out the reaction xanthine + NAD(+) + H2O = urate + NADH + H(+). The catalysed reaction is hypoxanthine + NAD(+) + H2O = xanthine + NADH + H(+). Key enzyme in purine degradation. Catalyzes the oxidation of hypoxanthine to xanthine. Catalyzes the oxidation of xanthine to uric acid. The protein is Xanthine dehydrogenase (XDH) of Calliphora vicina (Blue blowfly).